The chain runs to 309 residues: Protein FdhE homolog (309 aa).

This sequence belongs to the FdhE family.

It is found in the cytoplasm. Its function is as follows. Necessary for formate dehydrogenase activity. This is Protein FdhE homolog from Yersinia pestis bv. Antiqua (strain Antiqua).